Here is a 298-residue protein sequence, read N- to C-terminus: DDRGK domain-containing protein 1 (298 aa).

The chain crosses the membrane as a helical span at residues 1 to 21 (MDIVLYFVAVPILIVLIVSAV). Residues 22-298 (KVRGKTEEDN…NLIPEIHNTA (277 aa)) lie on the Cytoplasmic side of the membrane. The segment at 71 to 149 (NSAYREAADN…EERRKEDKKE (79 aa)) is disordered. Acidic residues predominate over residues 82 to 94 (SPVEVEEEYEEAE). Basic and acidic residues predominate over residues 110 to 149 (KLEEKQAKRAQREAELEEREERKRTQELREEERRKEDKKE). The short motif at 181–195 (SFVVEEQGEADELTE) is the UFM1-interacting motif (UFIM) element. The 45-residue stretch at 215-259 (VLLEDLASHFGLRTQDAISRLQDLLSDGSITGVIDDRGKFIFITP) folds into the PCI domain.

This sequence belongs to the DDRGK1 family. In terms of assembly, component of the UFM1 ribosome E3 ligase (UREL) complex, composed of ufl1, ddrgk1 and cdk5rap3.

The protein localises to the endoplasmic reticulum membrane. Component of the UFM1 ribosome E3 ligase (UREL) complex, a multiprotein complex that catalyzes ufmylation of endoplasmic reticulum-docked proteins. The UREL complex plays a key role in ribosome recycling by mediating mono-ufmylation of the RPL26/uL24 subunit of the 60S ribosome following ribosome dissociation: ufmylation weakens the junction between post-termination 60S subunits and SEC61 translocons, promoting release and recycling of the large ribosomal subunit from the endoplasmic reticulum membrane. Ufmylation of RPL26/uL24 and subsequent 60S ribosome recycling either take place after normal termination of translation or after ribosome stalling during cotranslational translocation at the endoplasmic reticulum. Within the UREL complex, DDRGK1 tethers the complex to the endoplasmic reticulum membrane to restrict its activity to endoplasmic reticulum-docked ribosomes and acts as an ufmylation 'reader': following RPL26/uL24 ufmylation, DDRGK1 specifically binds to ufmylated RPL26/uL24 via its UFIM motif, resulting in stable association between the 60S ribosome and the UREL complex, followed by dissociation of the 60S ribosome subunit from the endoplasmic reticulum membrane. The UREL complex is also involved in reticulophagy in response to endoplasmic reticulum stress by promoting ufmylation of proteins such as CYB5R3 and RPN1, thereby promoting lysosomal degradation of ufmylated proteins. Required for stabilization and ufmylation of ATG9A. The chain is DDRGK domain-containing protein 1 from Osmerus mordax (Rainbow smelt).